A 243-amino-acid chain; its full sequence is Small ribosomal subunit protein eS4 (243 aa).

The 63-residue stretch at 43–105 (IPLLYIVRDY…TGEHYRVLPN (63 aa)) folds into the S4 RNA-binding domain.

This sequence belongs to the eukaryotic ribosomal protein eS4 family.

The chain is Small ribosomal subunit protein eS4 (rps4e) from Pyrococcus abyssi (strain GE5 / Orsay).